The primary structure comprises 279 residues: Thymidylate synthase (279 aa).

141–142 serves as a coordination point for dUMP; it reads RR. C161 serves as the catalytic Nucleophile. Residues 181–184, N192, and 222–224 each bind dUMP; these read RSND and HVY. D184 provides a ligand contact to (6R)-5,10-methylene-5,6,7,8-tetrahydrofolate. Residue A278 coordinates (6R)-5,10-methylene-5,6,7,8-tetrahydrofolate.

It belongs to the thymidylate synthase family. Bacterial-type ThyA subfamily. Homodimer.

It localises to the cytoplasm. It catalyses the reaction dUMP + (6R)-5,10-methylene-5,6,7,8-tetrahydrofolate = 7,8-dihydrofolate + dTMP. Its pathway is pyrimidine metabolism; dTTP biosynthesis. Its function is as follows. Catalyzes the reductive methylation of 2'-deoxyuridine-5'-monophosphate (dUMP) to 2'-deoxythymidine-5'-monophosphate (dTMP) while utilizing 5,10-methylenetetrahydrofolate (mTHF) as the methyl donor and reductant in the reaction, yielding dihydrofolate (DHF) as a by-product. This enzymatic reaction provides an intracellular de novo source of dTMP, an essential precursor for DNA biosynthesis. This Bacillus mojavensis protein is Thymidylate synthase.